Consider the following 188-residue polypeptide: dCTP deaminase (188 aa).

Residues 111–116, 135–137, Gln156, Tyr170, and Gln180 contribute to the dCTP site; these read KSTYAR and TLE. Glu137 (proton donor/acceptor) is an active-site residue.

It belongs to the dCTP deaminase family. As to quaternary structure, homotrimer.

It carries out the reaction dCTP + H2O + H(+) = dUTP + NH4(+). Its pathway is pyrimidine metabolism; dUMP biosynthesis; dUMP from dCTP (dUTP route): step 1/2. Its function is as follows. Catalyzes the deamination of dCTP to dUTP. This Francisella tularensis subsp. tularensis (strain FSC 198) protein is dCTP deaminase.